Here is a 1167-residue protein sequence, read N- to C-terminus: MTNEAINQQPQTEAAFNPQQFINNLQVAFIKVDNVVASFDPNQKPIVDKNDRDNRQAFEKISQLREEFANKAIKNPTKKNQYFSSFISKSNDLIDKDNLIDTGSSIKSFQKFGTQRYQIFMNWVSHQNDPSKINTQKIRGFMENIIQPPISDDKEKAEFLRSAKQAFAGIIIGNQIRSDQKFMGVFDESLKERQEAEKNGEPNGDPTGGDWLDIFLSFVFNKKQSSDLKETLNQEPVPHVQPDVATTTTDIQSLPPEARDLLDERGNFSKFTLGDMNMLDVEGVADIDPNYKFNQLLIHNNALSSVLMGSHNGIEPEKVSLLYGNNGGPEARHDWNATVGYKNQRGDNVATLINVHMKNGSGLVIAGGEKGINNPSFYLYKEDQLTGSQRALSQEEIQNKVDFMEFLAQNNAKLDNLSKKEKEKFQNEIEDFQKDSKAYLDALGNDHIAFVSKKDKKHLALVAEFGNGELSYTLKDYGKKADKALDREAKTTLQGSLKHDGVMFVDYSNFKYTNASKSPDKGVGATNGVSHLEAGFSKVAVFNLPNLNNLAITSVVRQDLEDKLIAKGLSPQEANKLVKDFLSSNKELVGKALNFNKAVAEAKNTGNYDEVKQAQKDLEKSLKKRERLEKDVAKNLESKSGNKNKMEAKSQANSQKDEIFALINKEANRDARAIAYAQNLKGIKRELSDKLENINKDLKDFSKSFDEFKNGKNKDFSKAEETLKALKGSVKDLGINPEWISKVENLNAALNEFKNGKNKDFSKVTQAKSDLENSIKDVIINQKITDKVDNLNQAVSVAKATGDFSGVEQALADLKNFSKEQLAQQAQKNEDFNTGKNSALYQSVKNGVNGTLVGNGLSKAEATTLSKNFSDIKKELNAKLGNFNNNNNNGLENSTEPIYTQVAKKVKAKIDRLDQIASGLGDVGQAASFLLKRHDKVDDLSKVGLSANHEPIYATIDDLGGPFPLKRHDKVDDLSKVGLSREQKLTQKIDNLNQAVSEAKASHFDNLDQMIDKLKDSTKKNVVNLYVESAKKVPTSLSAKLDNYATNSHTRINSNVKNGTINEKATGMLTQKNSEWLKLVNDKIVAHNVGSAPLSAYDKIGFNQKNMKDYSDSFKFSTRLSNAVKDIKSGFVQFLTNIFSMGSYSLMKASVEHGVKNTNTKGGFQKS.

A disordered region spans residues 632-651; the sequence is VAKNLESKSGNKNKMEAKSQ.

May be necessary for the transcription, folding, export, or function of the cytotoxin. The polypeptide is Cytotoxicity-associated immunodominant antigen (cagA) (Helicobacter pylori (strain J99 / ATCC 700824) (Campylobacter pylori J99)).